The primary structure comprises 448 residues: Doublesex- and mab-3-related transcription factor A2 (448 aa).

Positions 57–104 (CARCRNHGVVSALKGHKRYCRWKDCMCAKCTLIAERQRVMAAQVALRR) form a DNA-binding region, DM. Residues 166-187 (SQLSGSATPQQSVGKPASTESD) are compositionally biased toward polar residues. The interval 166–259 (SQLSGSATPQ…SPSSAASRHM (94 aa)) is disordered. A compositionally biased stretch (low complexity) spans 229–239 (GSVSSLGSDSG). The 36-residue stretch at 259–294 (MNAIDILTRVFPSHKRSVQELVLQGCGKDVVRAIEQ) folds into the DMA domain.

It belongs to the DMRT family.

The protein localises to the nucleus. Functionally, may be involved in sexual development. This Monopterus albus (Swamp eel) protein is Doublesex- and mab-3-related transcription factor A2 (dmrta2).